A 96-amino-acid polypeptide reads, in one-letter code: Small ribosomal subunit protein bS18 (96 aa).

This sequence belongs to the bacterial ribosomal protein bS18 family. As to quaternary structure, part of the 30S ribosomal subunit. Forms a tight heterodimer with protein bS6.

Its function is as follows. Binds as a heterodimer with protein bS6 to the central domain of the 16S rRNA, where it helps stabilize the platform of the 30S subunit. The polypeptide is Small ribosomal subunit protein bS18 (Borrelia garinii subsp. bavariensis (strain ATCC BAA-2496 / DSM 23469 / PBi) (Borreliella bavariensis)).